Reading from the N-terminus, the 1643-residue chain is Neurexin-3 (1643 aa).

The signal sequence occupies residues 1-27; it reads MSSTLHSVFFTLKVSILLGSLLGLCLG. One can recognise a Laminin G-like 1 domain in the interval 28–202; sequence LEFMGLPNQW…GVQMDAEGPC (175 aa). Topologically, residues 28-1568 are extracellular; the sequence is LEFMGLPNQW…EVIRESSSTT (1541 aa). N-linked (GlcNAc...) asparagine glycosylation is found at asparagine 58 and asparagine 105. The EGF-like 1 domain maps to 198-235; the sequence is AEGPCGERPCENGGICFLLDGHPTCDCSTTGYGGKLCS. 3 disulfides stabilise this stretch: cysteine 202–cysteine 213, cysteine 207–cysteine 222, and cysteine 224–cysteine 234. Laminin G-like domains are found at residues 258 to 440 and 447 to 639; these read VATF…VFKC and DPIN…KSSC. Ca(2+)-binding residues include aspartate 304, leucine 321, and methionine 374. 5 disulfide bridges follow: cysteine 404-cysteine 440, cysteine 610-cysteine 639, cysteine 647-cysteine 658, cysteine 652-cysteine 667, and cysteine 669-cysteine 679. The 38-residue stretch at 643 to 680 folds into the EGF-like 2 domain; it reads SAKQCDSYPCKNNAVCKDGWNRFICDCTGTGYWGRTCE. Laminin G-like domains follow at residues 685–857 and 871–1046; these read ILSY…IDYC and DPVT…ERGC. Ca(2+) is bound by residues aspartate 732 and leucine 749. An N-linked (GlcNAc...) asparagine glycan is attached at asparagine 757. Arginine 807 serves as a coordination point for Ca(2+). Intrachain disulfides connect cysteine 1018-cysteine 1046, cysteine 1053-cysteine 1064, cysteine 1058-cysteine 1073, and cysteine 1075-cysteine 1085. The region spanning 1049–1086 is the EGF-like 3 domain; it reads PSTTCQEDSCANQGVCMQQWEGFTCDCSMTSYSGNQCN. One can recognise a Laminin G-like 6 domain in the interval 1090–1260; it reads ATYIFGKSGG…NPNIKINGSV (171 aa). Residues aspartate 1142 and isoleucine 1159 each contribute to the Ca(2+) site. Asparagine 1189 carries N-linked (GlcNAc...) asparagine glycosylation. Ca(2+)-binding residues include isoleucine 1211 and asparagine 1213. N-linked (GlcNAc...) asparagine glycans are attached at residues asparagine 1257 and asparagine 1301. The segment at 1294-1318 is disordered; that stretch reads ATTTTRKNRSTASIQPTSDDLVSSA. Residues 1303–1318 are compositionally biased toward polar residues; it reads STASIQPTSDDLVSSA. O-linked (Xyl...) (heparan sulfate) serine glycosylation is present at serine 1317. The chain crosses the membrane as a helical span at residues 1569 to 1589; the sequence is GMVVGIVAAAALCILILLYAM. Residues 1590-1643 are Cytoplasmic-facing; sequence YKYRNRDEGSYQVDETRNYISNSAQSNGTLMKEKQQSSKSGHKKQKNKDREYYV. The segment at 1611–1643 is disordered; sequence NSAQSNGTLMKEKQQSSKSGHKKQKNKDREYYV.

This sequence belongs to the neurexin family. The laminin G-like domain 2 binds to NXPH1. Specific isoforms bind to alpha-dystroglycan. The cytoplasmic C-terminal region binds to CASK. Specific isoforms bind neuroligins NLGN1, NLGN2 and NLGN3. Interacts with CLSTN3. Post-translationally, O-glycosylated; contains heparan sulfate. Heparan sulfate attachment is required for synapse development by mediating interactions with neuroligins. As to expression, expressed in the blood vessel walls (at protein level). Highly expressed in brain, lung, and pancreas; a lower level of expression is detectable in heart, placenta, liver, and kidney, whereas no expression can be observed in skeletal muscle. Isoform 4a is heart-specific.

The protein localises to the presynaptic cell membrane. In terms of biological role, neuronal cell surface protein that may be involved in cell recognition and cell adhesion. May mediate intracellular signaling. The sequence is that of Neurexin-3 (NRXN3) from Homo sapiens (Human).